Consider the following 221-residue polypeptide: 3-dehydroquinate dehydratase (221 aa).

3-dehydroquinate contacts are provided by residues 33 to 35 and Arg-63; that span reads EIR. The Proton donor/acceptor role is filled by His-118. Lys-144 functions as the Schiff-base intermediate with substrate in the catalytic mechanism. Residues Arg-181, Thr-200, and Gln-204 each contribute to the 3-dehydroquinate site.

The protein belongs to the type-I 3-dehydroquinase family. Homodimer.

It catalyses the reaction 3-dehydroquinate = 3-dehydroshikimate + H2O. It functions in the pathway metabolic intermediate biosynthesis; chorismate biosynthesis; chorismate from D-erythrose 4-phosphate and phosphoenolpyruvate: step 3/7. In terms of biological role, involved in the third step of the chorismate pathway, which leads to the biosynthesis of aromatic amino acids. Catalyzes the cis-dehydration of 3-dehydroquinate (DHQ) and introduces the first double bond of the aromatic ring to yield 3-dehydroshikimate. This is 3-dehydroquinate dehydratase from Methanothermobacter thermautotrophicus (strain ATCC 29096 / DSM 1053 / JCM 10044 / NBRC 100330 / Delta H) (Methanobacterium thermoautotrophicum).